The sequence spans 317 residues: MNDSTFTLGIVGARGHTGAELIKLVAAHPRLQLAFVSSRERAGQRLADHHPEFQGELRYENLDADAVAAKGVDAVILALPNGLAAPFVAALEAAKPDTVIVDLSADYRFDNAWYYGLPELTRGRYNGQKHISNPGCYATAMQLAIYPLLDLLAGPPQCFGVSGYSGAGTTPSDKNNVELLADNLMPYALTNHVHEREVSVQMGVAVEFMPHVAPHFRGITLTANLWLNRVQTREQIVERFQQAYAGEPLIEVVDEAPWVSRIAGRHGAQVGGFTLAPGGKRVVVVATLDNLLKGAASQAMQNLNLALGIDELTSIPH.

Residue Cys-136 is part of the active site.

Belongs to the NAGSA dehydrogenase family. Type 1 subfamily.

The protein resides in the cytoplasm. It carries out the reaction N-acetyl-L-glutamate 5-semialdehyde + phosphate + NADP(+) = N-acetyl-L-glutamyl 5-phosphate + NADPH + H(+). It participates in amino-acid biosynthesis; L-arginine biosynthesis; N(2)-acetyl-L-ornithine from L-glutamate: step 3/4. In terms of biological role, catalyzes the NADPH-dependent reduction of N-acetyl-5-glutamyl phosphate to yield N-acetyl-L-glutamate 5-semialdehyde. The chain is N-acetyl-gamma-glutamyl-phosphate reductase from Stenotrophomonas maltophilia (strain R551-3).